Here is a 331-residue protein sequence, read N- to C-terminus: Phosphoenolpyruvate transferase (331 aa).

7,8-didemethyl-8-hydroxy-5-deazariboflavin is bound at residue Asp63.

This sequence belongs to the CofD family. Homodimer. It depends on Mg(2+) as a cofactor.

It carries out the reaction enolpyruvoyl-2-diphospho-5'-guanosine + 7,8-didemethyl-8-hydroxy-5-deazariboflavin = dehydro coenzyme F420-0 + GMP + H(+). It participates in cofactor biosynthesis; coenzyme F420 biosynthesis. In terms of biological role, catalyzes the transfer of the phosphoenolpyruvate moiety from enoylpyruvoyl-2-diphospho-5'-guanosine (EPPG) to 7,8-didemethyl-8-hydroxy-5-deazariboflavin (FO) with the formation of dehydro coenzyme F420-0 and GMP. The chain is Phosphoenolpyruvate transferase from Mycobacterium sp. (strain JLS).